Here is a 196-residue protein sequence, read N- to C-terminus: Holliday junction branch migration complex subunit RuvA (196 aa).

The domain I stretch occupies residues 1–63 (MINKIYGKIV…DDDVKLFGFL (63 aa)). The domain II stretch occupies residues 64 to 142 (NISEREVFED…KGDESSSYML (79 aa)). Lysine 143 is a region of interest (flexible linker). Residues 143 to 196 (KFKELEQSIVNMGFDRKLVVVAFREIMLSDKFLILKEAEQEQFLFTETLKRLSV) form a domain III region.

The protein belongs to the RuvA family. Homotetramer. Forms an RuvA(8)-RuvB(12)-Holliday junction (HJ) complex. HJ DNA is sandwiched between 2 RuvA tetramers; dsDNA enters through RuvA and exits via RuvB. An RuvB hexamer assembles on each DNA strand where it exits the tetramer. Each RuvB hexamer is contacted by two RuvA subunits (via domain III) on 2 adjacent RuvB subunits; this complex drives branch migration. In the full resolvosome a probable DNA-RuvA(4)-RuvB(12)-RuvC(2) complex forms which resolves the HJ.

The protein localises to the cytoplasm. Functionally, the RuvA-RuvB-RuvC complex processes Holliday junction (HJ) DNA during genetic recombination and DNA repair, while the RuvA-RuvB complex plays an important role in the rescue of blocked DNA replication forks via replication fork reversal (RFR). RuvA specifically binds to HJ cruciform DNA, conferring on it an open structure. The RuvB hexamer acts as an ATP-dependent pump, pulling dsDNA into and through the RuvAB complex. HJ branch migration allows RuvC to scan DNA until it finds its consensus sequence, where it cleaves and resolves the cruciform DNA. This Borrelia duttonii (strain Ly) protein is Holliday junction branch migration complex subunit RuvA.